Reading from the N-terminus, the 211-residue chain is Large ribosomal subunit protein eL13 (211 aa).

This sequence belongs to the eukaryotic ribosomal protein eL13 family. As to quaternary structure, component of the 60S large ribosomal subunit (LSU).

It is found in the cytoplasm. Component of the ribosome, a large ribonucleoprotein complex responsible for the synthesis of proteins in the cell. The small ribosomal subunit (SSU) binds messenger RNAs (mRNAs) and translates the encoded message by selecting cognate aminoacyl-transfer RNA (tRNA) molecules. The large subunit (LSU) contains the ribosomal catalytic site termed the peptidyl transferase center (PTC), which catalyzes the formation of peptide bonds, thereby polymerizing the amino acids delivered by tRNAs into a polypeptide chain. The nascent polypeptides leave the ribosome through a tunnel in the LSU and interact with protein factors that function in enzymatic processing, targeting, and the membrane insertion of nascent chains at the exit of the ribosomal tunnel. As part of the LSU, it is probably required for its formation and the maturation of rRNAs. This chain is Large ribosomal subunit protein eL13 (rpl13), found in Danio rerio (Zebrafish).